The chain runs to 109 residues: Cell division suppressor protein YneA (109 aa).

The 52-residue stretch at Ser-39–Ile-90 folds into the LysM domain.

Belongs to the YneA family.

It localises to the cytoplasm. Its function is as follows. Inhibits cell division during the SOS response. Affects a later stage of the cell division protein assembly, after the assembly of the Z ring, by probably suppressing recruitment of FtsL and/or DivIC to the division machinery. The protein is Cell division suppressor protein YneA of Listeria monocytogenes serovar 1/2a (strain ATCC BAA-679 / EGD-e).